The following is a 476-amino-acid chain: Serine--tRNA ligase (476 aa).

An L-serine-binding site is contributed by 279 to 281; the sequence is TAE. 310–312 contributes to the ATP binding site; that stretch reads RAE. Glu-333 serves as a coordination point for L-serine. 400–403 lines the ATP pocket; that stretch reads EISS. Ser-435 is a binding site for L-serine.

The protein belongs to the class-II aminoacyl-tRNA synthetase family. Type-1 seryl-tRNA synthetase subfamily. As to quaternary structure, homodimer. The tRNA molecule binds across the dimer.

It is found in the cytoplasm. It carries out the reaction tRNA(Ser) + L-serine + ATP = L-seryl-tRNA(Ser) + AMP + diphosphate + H(+). The enzyme catalyses tRNA(Sec) + L-serine + ATP = L-seryl-tRNA(Sec) + AMP + diphosphate + H(+). It participates in aminoacyl-tRNA biosynthesis; selenocysteinyl-tRNA(Sec) biosynthesis; L-seryl-tRNA(Sec) from L-serine and tRNA(Sec): step 1/1. Its function is as follows. Catalyzes the attachment of serine to tRNA(Ser). Is also able to aminoacylate tRNA(Sec) with serine, to form the misacylated tRNA L-seryl-tRNA(Sec), which will be further converted into selenocysteinyl-tRNA(Sec). The sequence is that of Serine--tRNA ligase from Rhodopseudomonas palustris (strain BisA53).